The sequence spans 185 residues: CASP-like protein 2C2 (185 aa).

At 1–22 (MAAAARVSEVKAEGLLRGACTA) the chain is on the cytoplasmic side. The chain crosses the membrane as a helical span at residues 23–43 (LAAAAALLVGLSTQTETVLLV). Topologically, residues 44-53 (RKKATVKDVQ) are extracellular. A helical membrane pass occupies residues 54 to 74 (ALWVLAMAAAAAAGYHLLQLL). Residues 75 to 104 (KCLYLGRVGGARPCRRSSRALAWTCLLLDK) are Cytoplasmic-facing. A helical membrane pass occupies residues 105–125 (ACAYTTFATTVAAAQACVVAL). Topologically, residues 126-146 (DGAHALQWTKLCNIYTRFCEQ) are extracellular. Residues 147–167 (VAGSLVLGMLAAVGTAVLSAA) traverse the membrane as a helical segment. Topologically, residues 168-185 (SARNVFRHYASLETYAAH) are cytoplasmic.

This sequence belongs to the Casparian strip membrane proteins (CASP) family. Homodimer and heterodimers.

The protein resides in the cell membrane. The sequence is that of CASP-like protein 2C2 from Zea mays (Maize).